The chain runs to 649 residues: Epithelial sodium channel subunit gamma (649 aa).

At 1–55 the chain is on the cytoplasmic side; sequence MAPGEKIKAKIKKNLPVTGPQAPTIKELMRWYCLNTNTHGCRRIVVSRGRLRRLL. Residues 56-76 form a helical membrane-spanning segment; the sequence is WIGFTLTAVALILWQCALLVF. Residues 77-541 are Extracellular-facing; that stretch reads SFYTVSVSIK…GGQLGLWMSC (465 aa). 8 disulfides stabilise this stretch: C100/C283, C207/C214, C260/C267, C372/C457, C394/C453, C398/C449, C407/C434, and C409/C423. The segment at 135-221 is gating release of inhibition by proteolysis (GRIP); protease-sensitive region that is responsible for the proteolytic activation of the channel; that stretch reads RKRREAESWN…SDCATYTFSS (87 aa). Residue N209 is glycosylated (N-linked (GlcNAc...) asparagine). N-linked (GlcNAc...) asparagine glycosylation occurs at N497. A helical membrane pass occupies residues 542 to 562; the sequence is SVVCVIEIIEVFFIDFFSIIA. The Cytoplasmic segment spans residues 563–649; it reads RRQWQKAKEW…LTDTQMLDEL (87 aa). A PY motif; recruits WW domain-containing proteins and is thereby required for ubiquitination and inhibition of the channel by NEDD4 and NEDD4L motif is present at residues 623-627; it reads PPPKY.

Belongs to the amiloride-sensitive sodium channel (TC 1.A.6) family. SCNN1G subfamily. As to quaternary structure, component of the heterotrimeric epithelial sodium channel (ENaC) composed of an alpha/SCNN1A, a beta/SCNN1B and a gamma/SCNN1G subunit. An additional delta/SCNN1D subunit can replace the alpha/SCNN1A subunit to form an alternative channel with specific properties. Interacts with WWP1 (via WW domains). Interacts with WWP2 (via WW domains); inhibits the channel. Interacts with the full-length immature form of PCSK9 (pro-PCSK9); inhibits ENaC by promoting its proteasomal degradation. Interacts with BPIFA1; the interaction is indirect via SCNN1B and inhibits the proteolytic maturation of SCNN1A and SCNN1G and the activation of ENaC. Phosphorylated on serine and threonine residues. Aldosterone and insulin increase the basal level of phosphorylation. Post-translationally, ubiquitinated. Can be ubiquitinated at multiple sites and undergo monoubiquitination and polyubiquitination. Ubiquitination by NEDD4 or NEDD4L inhibits the ENaC channel through endocytosis, intracellular retention and degradation of its individual subunits. In terms of processing, ENaC is activated through the proteolytic maturation of its subunits. Furin cleaves the SCNN1G subunit first, followed by cleavage by prostasin (PRSS8), which results in a stepwise increase in the open probability of the channel due to the release of an inhibitory tract. BPIFA1, which is recruited by the SCNN1B subunit, prevents the proteolytic activation of ENaC. N-glycosylated. N-linked glycans are processed to complex type during ENaC complex assembly and transport to the plasma membrane. As to expression, expressed in kidney (at protein level).

It localises to the apical cell membrane. The enzyme catalyses Na(+)(in) = Na(+)(out). With respect to regulation, originally identified and characterized by its inhibition by the diuretic drug amiloride. In terms of biological role, this is one of the three pore-forming subunits of the heterotrimeric epithelial sodium channel (ENaC), a critical regulator of sodium balance and fluid homeostasis. ENaC operates in epithelial tissues, where it mediates the electrodiffusion of sodium ions from extracellular fluid through the apical membrane of cells, with water following osmotically. It plays a key role in maintaining sodium homeostasis through electrogenic sodium reabsorption in the kidneys. Additionally, ENaC is essential for airway surface liquid homeostasis, which is crucial for proper mucus clearance. In Homo sapiens (Human), this protein is Epithelial sodium channel subunit gamma.